Consider the following 388-residue polypeptide: tRNA (guanine(26)-N(2))-dimethyltransferase (388 aa).

The region spanning 4 to 383 (KTIVEGTTKV…APITEIKEII (380 aa)) is the Trm1 methyltransferase domain. The S-adenosyl-L-methionine site is built by R41, R78, D94, and A123. Zn(2+)-binding residues include C251, C254, C271, and C274.

The protein belongs to the class I-like SAM-binding methyltransferase superfamily. Trm1 family.

It catalyses the reaction guanosine(26) in tRNA + 2 S-adenosyl-L-methionine = N(2)-dimethylguanosine(26) in tRNA + 2 S-adenosyl-L-homocysteine + 2 H(+). Functionally, dimethylates a single guanine residue at position 26 of a number of tRNAs using S-adenosyl-L-methionine as donor of the methyl groups. The sequence is that of tRNA (guanine(26)-N(2))-dimethyltransferase from Methanosarcina barkeri (strain Fusaro / DSM 804).